We begin with the raw amino-acid sequence, 265 residues long: Tryptophan synthase alpha chain (265 aa).

Catalysis depends on proton acceptor residues E49 and E60.

It belongs to the TrpA family. In terms of assembly, tetramer of two alpha and two beta chains.

The catalysed reaction is (1S,2R)-1-C-(indol-3-yl)glycerol 3-phosphate + L-serine = D-glyceraldehyde 3-phosphate + L-tryptophan + H2O. The protein operates within amino-acid biosynthesis; L-tryptophan biosynthesis; L-tryptophan from chorismate: step 5/5. Functionally, the alpha subunit is responsible for the aldol cleavage of indoleglycerol phosphate to indole and glyceraldehyde 3-phosphate. The chain is Tryptophan synthase alpha chain from Janthinobacterium sp. (strain Marseille) (Minibacterium massiliensis).